The primary structure comprises 682 residues: E3 ubiquitin-protein ligase RNF103 (682 aa).

Helical transmembrane passes span 6 to 26, 326 to 346, 366 to 386, and 411 to 431; these read FFLL…EAIV, LFVL…FITQ, LLII…LDSF, and MFYS…GLLI. Acidic residues predominate over residues 525 to 542; it reads EEMSESSQDTENDSDSDN. Positions 525-549 are disordered; the sequence is EEMSESSQDTENDSDSDNTDTFSSS. An RING-type zinc finger spans residues 618–660; it reads CVVCLENFENGCLLMGLPCGHVFHQNCIVMWLAGGRHCCPVCR.

In terms of assembly, interacts with DERL1 and VCP. Expressed in different tissues including hippocampus, cerebral cortex, heart, kidney, spleen and lung. Expression is increased in hippocampus and frontal cortex after chronic treatment with antidepressants.

It localises to the endoplasmic reticulum membrane. It catalyses the reaction S-ubiquitinyl-[E2 ubiquitin-conjugating enzyme]-L-cysteine + [acceptor protein]-L-lysine = [E2 ubiquitin-conjugating enzyme]-L-cysteine + N(6)-ubiquitinyl-[acceptor protein]-L-lysine.. It participates in protein modification; protein ubiquitination. Functionally, acts as an E2-dependent E3 ubiquitin-protein ligase, probably involved in the ER-associated protein degradation pathway. This Rattus norvegicus (Rat) protein is E3 ubiquitin-protein ligase RNF103 (Rnf103).